A 448-amino-acid polypeptide reads, in one-letter code: 4-hydroxybenzoate transporter PcaK (448 aa).

The Cytoplasmic portion of the chain corresponds to 1–30; that stretch reads MNSPSLPAVERLDVQAFINAQPLSPYQWRI. The chain crosses the membrane as a helical span at residues 31-51; that stretch reads VLLCFLIVFLDGLDTAAMGFI. The Periplasmic portion of the chain corresponds to 52 to 67; that stretch reads APALTQDWGIDRASLG. The helical transmembrane segment at 68-88 threads the bilayer; sequence PVMSAALIGMVFGALGSGPLA. Residues 89–94 are Cytoplasmic-facing; sequence DRYGRK. The chain crosses the membrane as a helical span at residues 95–115; that stretch reads LVLVAAVFLFGLFSLASAYST. The Periplasmic portion of the chain corresponds to 116 to 119; it reads NVEQ. Residues 120–140 traverse the membrane as a helical segment; that stretch reads LLALRFLTGLGLGAAMPNATT. Topologically, residues 141 to 152 are cytoplasmic; it reads LLSEYTPERLKS. Residues 153–173 traverse the membrane as a helical segment; the sequence is LLVTSMFCGFNLGMACGGFVS. Residues 174-184 are Periplasmic-facing; it reads AKLIPLFGWHS. The chain crosses the membrane as a helical span at residues 185–205; the sequence is LLLLGGLLPLVLAVVLLFRLP. Residues 206 to 261 are Cytoplasmic-facing; the sequence is ESARYLVVRNRGSERVRQVLAPIAPAQVALARSFHVPEQQTVQARNVFAVIFSGTY. Residues 262-282 form a helical membrane-spanning segment; sequence SAGTLLLWLTYFMGLVIVYLL. The Periplasmic portion of the chain corresponds to 283 to 301; the sequence is TSWLPTLMRDSGASLEQAA. Residues 302–322 traverse the membrane as a helical segment; that stretch reads FIGALFQFGGVLSAVAVGWAM. Residues 323 to 329 are Cytoplasmic-facing; the sequence is DRFNPHK. Residues 330 to 350 form a helical membrane-spanning segment; sequence VIGLFYLLAGVFAWCVGQSLG. A topological domain (periplasmic) is located at residue glutamine 351. The helical transmembrane segment at 352-372 threads the bilayer; the sequence is VTLLATLVLLAGMCINGAQSA. Residues 373–398 lie on the Cytoplasmic side of the membrane; the sequence is MPSLAARFYPTQGRATGVSWMLGIGR. Residues 399–419 traverse the membrane as a helical segment; that stretch reads FGAILGAWIGATLLGLGWNFE. Residues 420 to 421 are Periplasmic-facing; it reads QV. A helical transmembrane segment spans residues 422 to 442; the sequence is LTALVLPAALATAAVLLKGLV. The Cytoplasmic segment spans residues 443–448; that stretch reads SHADAG.

It belongs to the major facilitator superfamily. Aromatic acid:H(+) symporter (AAHS) (TC 2.A.1.15) family.

It localises to the cell inner membrane. Transports 4-hydroxybenzoate (4-HBA) and protocatechuate across the membrane. Driven by the proton motive force. Also functions as a chemoreceptor, which is required for chemotaxis to aromatic acids. The sequence is that of 4-hydroxybenzoate transporter PcaK (pcaK) from Pseudomonas aeruginosa (strain ATCC 15692 / DSM 22644 / CIP 104116 / JCM 14847 / LMG 12228 / 1C / PRS 101 / PAO1).